Reading from the N-terminus, the 509-residue chain is Cytochrome P450 monooxygenase hepC (509 aa).

A helical transmembrane segment spans residues 5–25 (MIIPSFWTGTAIIGLVACAYV). A heme-binding site is contributed by Cys-454. A glycan (N-linked (GlcNAc...) asparagine) is linked at Asn-491.

This sequence belongs to the cytochrome P450 family. Heme serves as cofactor.

Its subcellular location is the membrane. The protein operates within secondary metabolite biosynthesis. Its function is as follows. Cytochrome P450 monooxygenase; part of the gene cluster that mediates the biosynthesis of heptelidic acid (HA), a sesquiterpene lactone that acts as an inhibitor of glyceraldehyde-3-phosphatedehydrogenase (GAPDH) and a growth inhibitor of the salt-tolerant lactic acid bacteria in soy sauce brewing. The protein is Cytochrome P450 monooxygenase hepC of Aspergillus oryzae (strain ATCC 42149 / RIB 40) (Yellow koji mold).